Reading from the N-terminus, the 385-residue chain is 1-deoxy-D-xylulose 5-phosphate reductoisomerase (385 aa).

Positions 10, 11, 13, 36, and 38 each coordinate NADPH. Lys-123 is a 1-deoxy-D-xylulose 5-phosphate binding site. Residue Glu-124 coordinates NADPH. Asp-148 is a binding site for Mn(2+). The 1-deoxy-D-xylulose 5-phosphate site is built by Ser-149, Glu-150, Ser-172, and His-195. Glu-150 lines the Mn(2+) pocket. Gly-201 is an NADPH binding site. Residues Ser-208, Asn-213, Lys-214, and Glu-217 each coordinate 1-deoxy-D-xylulose 5-phosphate. Glu-217 lines the Mn(2+) pocket.

Belongs to the DXR family. Mg(2+) serves as cofactor. The cofactor is Mn(2+).

The catalysed reaction is 2-C-methyl-D-erythritol 4-phosphate + NADP(+) = 1-deoxy-D-xylulose 5-phosphate + NADPH + H(+). It functions in the pathway isoprenoid biosynthesis; isopentenyl diphosphate biosynthesis via DXP pathway; isopentenyl diphosphate from 1-deoxy-D-xylulose 5-phosphate: step 1/6. In terms of biological role, catalyzes the NADPH-dependent rearrangement and reduction of 1-deoxy-D-xylulose-5-phosphate (DXP) to 2-C-methyl-D-erythritol 4-phosphate (MEP). In Anaplasma phagocytophilum (strain HZ), this protein is 1-deoxy-D-xylulose 5-phosphate reductoisomerase.